The chain runs to 339 residues: Ketol-acid reductoisomerase (NADP(+)) (339 aa).

The 182-residue stretch at 1–182 folds into the KARI N-terminal Rossmann domain; it reads MRVYYDRDAD…GGGRAGIIET (182 aa). NADP(+) is bound by residues 24–27, Arg48, Ser51, and 83–86; these read YGSQ and DEGQ. His108 is an active-site residue. Gly134 is a binding site for NADP(+). The region spanning 183–328 is the KARI C-terminal knotted domain; that stretch reads TFKEEVETDL…EKLRAMMPWI (146 aa). The Mg(2+) site is built by Asp191, Glu195, Glu227, and Glu231. Ser252 serves as a coordination point for substrate.

The protein belongs to the ketol-acid reductoisomerase family. Mg(2+) is required as a cofactor.

The enzyme catalyses (2R)-2,3-dihydroxy-3-methylbutanoate + NADP(+) = (2S)-2-acetolactate + NADPH + H(+). It catalyses the reaction (2R,3R)-2,3-dihydroxy-3-methylpentanoate + NADP(+) = (S)-2-ethyl-2-hydroxy-3-oxobutanoate + NADPH + H(+). It functions in the pathway amino-acid biosynthesis; L-isoleucine biosynthesis; L-isoleucine from 2-oxobutanoate: step 2/4. The protein operates within amino-acid biosynthesis; L-valine biosynthesis; L-valine from pyruvate: step 2/4. Its function is as follows. Involved in the biosynthesis of branched-chain amino acids (BCAA). Catalyzes an alkyl-migration followed by a ketol-acid reduction of (S)-2-acetolactate (S2AL) to yield (R)-2,3-dihydroxy-isovalerate. In the isomerase reaction, S2AL is rearranged via a Mg-dependent methyl migration to produce 3-hydroxy-3-methyl-2-ketobutyrate (HMKB). In the reductase reaction, this 2-ketoacid undergoes a metal-dependent reduction by NADPH to yield (R)-2,3-dihydroxy-isovalerate. This Gluconobacter oxydans (strain 621H) (Gluconobacter suboxydans) protein is Ketol-acid reductoisomerase (NADP(+)).